Consider the following 485-residue polypeptide: MISSSKLKSVDFYRKIPRDLTEASLSGAGLSIVAALAMVFLFGMELSNYLAVNTSTSVIVDRSSDGEFLRIDFNLSFPALSCEFASVDVSDVLGTNRLNITKTVRKYSIDRNLVPTGSEFHPGPIPTVSKHGDDVEENHDDGSVPLSSRNFDSYSHQYPVLVVNFYAPWCYWSNRLKPSWEKTAKIMRERYDPEMDGRIILAKVDCTEEIDLCRRHHIQGYPSIRIFRKGSDLKENQGHHDHESYYGDRDTESLVAAMETYVANIPKDAHVLALEDKSNKTVDPAKRPAPLTSGCRIEGFVRVKKVPGSVVISARSGSHSFDPSQINVSHYVTQFSFGKRLSAKMFNELKRLTPYVGGHHDRLAGQSYIVKHGDVNANVTIEHYLQIVKTELVTLRSSKELKLVEEYEYTAHSSLVHSFYVPVVKFHFEPSPMQVLVTELPKSFSHFITNVCAIIGGVFTVAGILDSIFHNTLRLVKKVELGKNI.

The Thioredoxin domain occupies 114-263 (VPTGSEFHPG…LVAAMETYVA (150 aa)). Cys-170 (nucleophile) is an active-site residue. The helical transmembrane segment at 444 to 464 (FSHFITNVCAIIGGVFTVAGI) threads the bilayer.

This sequence belongs to the protein disulfide isomerase family.

The protein localises to the membrane. Functionally, acts as a protein-folding catalyst that interacts with nascent polypeptides to catalyze the formation, isomerization, and reduction or oxidation of disulfide bonds. May play a role in storage protein biogenesis. The polypeptide is Protein disulfide isomerase-like 5-4 (PDIL5-4) (Oryza sativa subsp. japonica (Rice)).